The primary structure comprises 342 residues: ERGWFDILDDWLKRDRFVFVGWSGILLFPCAYLALGGWLTGTTFVTSWYTHGLASSYLEGCNFLTVAVSTPANSMGHSLLLLWGPEAQGDFTRWCQLGGLWTFIALHGAFGLIGFMLRQFEIARLVGVRPYNAIAFSAPIAVFVSVFLIYPLGQSSWFFAPSFGVAAIFRFLLFFQGFHNWTLNPFHMMGVAGVLGGALLCAIHGATVENTLFQDGEGASTFRAFNPTQAEETYSMVTANRFWSQIFGIAFSNKRWLHFFMLFVPVTGLWMSAIGVVGLALNLRSYDFISQEIRAAEDPEFETFYTKNLLLNEGIRAWMAPQDQPHENFVFPEEVLPRGNAL.

Topologically, residues 1–29 (ERGWFDILDDWLKRDRFVFVGWSGILLFP) are cytoplasmic. Residues 30 to 50 (CAYLALGGWLTGTTFVTSWYT) traverse the membrane as a helical segment. The Lumenal segment spans residues 51–113 (HGLASSYLEG…IALHGAFGLI (63 aa)). Position 107 (His107) interacts with chlorophyll a. The chain crosses the membrane as a helical span at residues 114–130 (GFMLRQFEIARLVGVRP). The pheophytin a site is built by Gln119 and Asn132. Residues 131 to 141 (YNAIAFSAPIA) are Cytoplasmic-facing. A helical membrane pass occupies residues 142 to 155 (VFVSVFLIYPLGQS). The Lumenal segment spans residues 156–196 (SWFFAPSFGVAAIFRFLLFFQGFHNWTLNPFHMMGVAGVLG). Chlorophyll a is bound at residue His187. The chain crosses the membrane as a helical span at residues 197–217 (GALLCAIHGATVENTLFQDGE). A plastoquinone is bound by residues His204 and Phe251. His204 serves as a coordination point for Fe cation. Residues 218–267 (GASTFRAFNPTQAEETYSMVTANRFWSQIFGIAFSNKRWLHFFMLFVPVT) are Cytoplasmic-facing. His258 contributes to the Fe cation binding site. The chain crosses the membrane as a helical span at residues 268–284 (GLWMSAIGVVGLALNLR). The Lumenal segment spans residues 285-342 (SYDFISQEIRAAEDPEFETFYTKNLLLNEGIRAWMAPQDQPHENFVFPEEVLPRGNAL).

Belongs to the reaction center PufL/M/PsbA/D family. PSII is composed of 1 copy each of membrane proteins PsbA, PsbB, PsbC, PsbD, PsbE, PsbF, PsbH, PsbI, PsbJ, PsbK, PsbL, PsbM, PsbT, PsbX, PsbY, PsbZ, Psb30/Ycf12, peripheral proteins PsbO, CyanoQ (PsbQ), PsbU, PsbV and a large number of cofactors. It forms dimeric complexes. The cofactor is The D1/D2 heterodimer binds P680, chlorophylls that are the primary electron donor of PSII, and subsequent electron acceptors. It shares a non-heme iron and each subunit binds pheophytin, quinone, additional chlorophylls, carotenoids and lipids. There is also a Cl(-1) ion associated with D1 and D2, which is required for oxygen evolution. The PSII complex binds additional chlorophylls, carotenoids and specific lipids..

The protein localises to the cellular thylakoid membrane. It catalyses the reaction 2 a plastoquinone + 4 hnu + 2 H2O = 2 a plastoquinol + O2. Functionally, photosystem II (PSII) is a light-driven water:plastoquinone oxidoreductase that uses light energy to abstract electrons from H(2)O, generating O(2) and a proton gradient subsequently used for ATP formation. It consists of a core antenna complex that captures photons, and an electron transfer chain that converts photonic excitation into a charge separation. The D1/D2 (PsbA/PsbD) reaction center heterodimer binds P680, the primary electron donor of PSII as well as several subsequent electron acceptors. D2 is needed for assembly of a stable PSII complex. This chain is Photosystem II D2 protein, found in Thermostichus vulcanus (Synechococcus vulcanus).